A 446-amino-acid polypeptide reads, in one-letter code: Probable cytosolic iron-sulfur protein assembly protein 1 (446 aa).

7 WD repeats span residues 17–59 (AFKP…AHSN), 63–106 (GHTR…PLEE), 143–182 (GHEN…EGDD), 192–241 (EHDG…EWAC), 247–291 (GHSS…PEAS), 330–368 (VHTR…NPST), and 398–446 (GHGP…SIEL). Residues 106 to 128 (EGTKKGESTEIDVTRRRNNNDSD) show a composition bias toward basic and acidic residues. Residues 106-133 (EGTKKGESTEIDVTRRRNNNDSDKDNDD) are disordered.

It belongs to the WD repeat CIA1 family.

Its function is as follows. Essential component of the cytosolic iron-sulfur (Fe/S) protein assembly machinery. Required for the maturation of extramitochondrial Fe/S proteins. The polypeptide is Probable cytosolic iron-sulfur protein assembly protein 1 (Pyricularia oryzae (strain 70-15 / ATCC MYA-4617 / FGSC 8958) (Rice blast fungus)).